Here is a 116-residue protein sequence, read N- to C-terminus: Flagellar transcriptional regulator FlhD (116 aa).

Belongs to the FlhD family. In terms of assembly, homodimer; disulfide-linked. Forms a heterohexamer composed of two FlhC and four FlhD subunits. Each FlhC binds a FlhD dimer, forming a heterotrimer, and a hexamer assembles by dimerization of two heterotrimers.

The protein resides in the cytoplasm. Functions in complex with FlhC as a master transcriptional regulator that regulates transcription of several flagellar and non-flagellar operons by binding to their promoter region. Activates expression of class 2 flagellar genes, including fliA, which is a flagellum-specific sigma factor that turns on the class 3 genes. Also regulates genes whose products function in a variety of physiological pathways. The chain is Flagellar transcriptional regulator FlhD from Pantoea ananatis (strain LMG 20103).